An 83-amino-acid chain; its full sequence is ATP synthase subunit c, chloroplastic (83 aa).

A run of 2 helical transmembrane segments spans residues 3-23 (PIIS…AAIG) and 57-77 (LAFM…LLFA).

It belongs to the ATPase C chain family. In terms of assembly, F-type ATPases have 2 components, F(1) - the catalytic core - and F(0) - the membrane proton channel. F(1) has five subunits: alpha(3), beta(3), gamma(1), delta(1), epsilon(1). F(0) has four main subunits: a(1), b(1), b'(1) and c(10-14). The alpha and beta chains form an alternating ring which encloses part of the gamma chain. F(1) is attached to F(0) by a central stalk formed by the gamma and epsilon chains, while a peripheral stalk is formed by the delta, b and b' chains.

The protein resides in the plastid. The protein localises to the chloroplast thylakoid membrane. Its function is as follows. F(1)F(0) ATP synthase produces ATP from ADP in the presence of a proton or sodium gradient. F-type ATPases consist of two structural domains, F(1) containing the extramembraneous catalytic core and F(0) containing the membrane proton channel, linked together by a central stalk and a peripheral stalk. During catalysis, ATP synthesis in the catalytic domain of F(1) is coupled via a rotary mechanism of the central stalk subunits to proton translocation. Functionally, key component of the F(0) channel; it plays a direct role in translocation across the membrane. A homomeric c-ring of between 10-14 subunits forms the central stalk rotor element with the F(1) delta and epsilon subunits. The polypeptide is ATP synthase subunit c, chloroplastic (Diacronema lutheri (Unicellular marine alga)).